A 316-amino-acid polypeptide reads, in one-letter code: Apolipoprotein E (316 aa).

An N-terminal signal peptide occupies residues 1–18; that stretch reads MKVLWVALVITLLAGCQA. Tandem repeats lie at residues 79–100, 101–122, 123–144, 145–166, 167–188, 189–210, 211–232, and 233–254. Positions 79 to 254 are 8 X 22 AA approximate tandem repeats; that stretch reads VLMDETMKEV…HLEEMREQLE (176 aa). The interval 157-167 is LDL and other lipoprotein receptors binding; that stretch reads HLRKLRKRLLR. Residue 161–164 coordinates heparin; that stretch reads LRKR. Positions 209 to 289 are lipid-binding and lipoprotein association; the sequence is AATVGTLASQ…SWFEPLVEDM (81 aa). A heparin-binding site is contributed by 228–235; it reads HQKLRGRM. Residues 265-316 form a homooligomerization region; that stretch reads SQMRLQAEAFQARLKSWFEPLVEDMQRQWAGLVEKVQLAMATGPTSAPIENN. The segment at 277–289 is specificity for association with VLDL; the sequence is RLKSWFEPLVEDM.

Belongs to the apolipoprotein A1/A4/E family. As to quaternary structure, homotetramer. May interact with ABCA1; functionally associated with ABCA1 in the biogenesis of HDLs. May interact with APP/A4 amyloid-beta peptide; the interaction is extremely stable in vitro but its physiological significance is unclear. May interact with MAPT. May interact with MAP2. In the cerebrospinal fluid, interacts with secreted SORL1. Interacts with PMEL; this allows the loading of PMEL luminal fragment on ILVs to induce fibril nucleation. Post-translationally, APOE exists as multiple glycosylated and sialylated glycoforms within cells and in plasma. The extent of glycosylation and sialylation are tissue and context specific. In terms of processing, glycated in plasma VLDL. Phosphorylated by FAM20C in the extracellular medium.

It localises to the secreted. It is found in the extracellular space. The protein resides in the extracellular matrix. The protein localises to the extracellular vesicle. Its subcellular location is the endosome. It localises to the multivesicular body. Functionally, APOE is an apolipoprotein, a protein associating with lipid particles, that mainly functions in lipoprotein-mediated lipid transport between organs via the plasma and interstitial fluids. APOE is a core component of plasma lipoproteins and is involved in their production, conversion and clearance. Apolipoproteins are amphipathic molecules that interact both with lipids of the lipoprotein particle core and the aqueous environment of the plasma. As such, APOE associates with chylomicrons, chylomicron remnants, very low density lipoproteins (VLDL) and intermediate density lipoproteins (IDL) but shows a preferential binding to high-density lipoproteins (HDL). It also binds a wide range of cellular receptors including the LDL receptor/LDLR and the very low-density lipoprotein receptor/VLDLR that mediate the cellular uptake of the APOE-containing lipoprotein particles. Finally, APOE also has a heparin-binding activity and binds heparan-sulfate proteoglycans on the surface of cells, a property that supports the capture and the receptor-mediated uptake of APOE-containing lipoproteins by cells. This is Apolipoprotein E (APOE) from Tursiops truncatus (Atlantic bottle-nosed dolphin).